Reading from the N-terminus, the 49-residue chain is Large ribosomal subunit protein bL33B (49 aa).

It belongs to the bacterial ribosomal protein bL33 family.

Functionally, plays a role in sporulation at high temperatures. The polypeptide is Large ribosomal subunit protein bL33B (rpmGB) (Bacillus subtilis (strain 168)).